The chain runs to 408 residues: Cytochrome P450 55A3 (408 aa).

Heme is bound at residue Cys-357.

The protein belongs to the cytochrome P450 family. It depends on heme as a cofactor.

The polypeptide is Cytochrome P450 55A3 (CYP55A3) (Fusarium lichenicola (Cylindrocarpon lichenicola)).